Here is a 100-residue protein sequence, read N- to C-terminus: UPF0298 protein lp_2135 (100 aa).

It belongs to the UPF0298 family.

The protein localises to the cytoplasm. In Lactiplantibacillus plantarum (strain ATCC BAA-793 / NCIMB 8826 / WCFS1) (Lactobacillus plantarum), this protein is UPF0298 protein lp_2135.